Here is a 163-residue protein sequence, read N- to C-terminus: Nucleotide-binding protein GWCH70_0711 (163 aa).

It belongs to the YajQ family.

Nucleotide-binding protein. The chain is Nucleotide-binding protein GWCH70_0711 from Geobacillus sp. (strain WCH70).